The chain runs to 530 residues: MKNNFDDISAIIKDRIKNFDQKIDRSEVGKVISIGDGIALVSGLDKVENSEVVIFDNDVYGLALNLEEEAVGVALFGNSNLISEGDSVRRSGQVISVPVGEAMLSRVVDSLGKPIDGKGPIKSSKMAKIFKLAPGVMTRKEVNQPLETGIIAIDSMIPVGKGQRELIIGDRQTGKTAIAIDTIINQKGKNVYCVYVAIGQKNSTVAQIVQKLNDTGSMDYTTVVVAGASESAPQQYIAPYTGVTIAEEFMSQGKDVLVIYDDLSKHAIAYRTLSLLLRRPPGREAYPGDVFYLHSQLLERAARLNKKYGGGSITAFPIIETQQGDISAYIPTNVISITDGQIFTKESLFNSGQRPAVDVGFSVSRVGSAAQTKAMKSVVGSLKLELAQYNEMLAFAQFGSDLDENTKAILEHGAKVYELIKQDQYSPISQADQAVILIGVKERIINIVPKEWISEYRNQVIKYLQKDPDGKVIESNIINEGIISKENYAKLEQALVKICKSIVSSIPNYDASMHKSLPEKYLETKEVDNV.

Position 169 to 176 (169 to 176 (GDRQTGKT)) interacts with ATP.

It belongs to the ATPase alpha/beta chains family. F-type ATPases have 2 components, CF(1) - the catalytic core - and CF(0) - the membrane proton channel. CF(1) has five subunits: alpha(3), beta(3), gamma(1), delta(1), epsilon(1). CF(0) has three main subunits: a(1), b(2) and c(9-12). The alpha and beta chains form an alternating ring which encloses part of the gamma chain. CF(1) is attached to CF(0) by a central stalk formed by the gamma and epsilon chains, while a peripheral stalk is formed by the delta and b chains.

The protein localises to the cell membrane. It catalyses the reaction ATP + H2O + 4 H(+)(in) = ADP + phosphate + 5 H(+)(out). Its function is as follows. Produces ATP from ADP in the presence of a proton gradient across the membrane. The alpha chain is a regulatory subunit. The protein is ATP synthase subunit alpha of Mycoplasmopsis synoviae (strain 53) (Mycoplasma synoviae).